The following is a 978-amino-acid chain: Transcription factor MYCGRDRAFT_87993 (978 aa).

2 C2H2-type zinc fingers span residues 2–24 and 30–52; these read VFCT…ILTH and FKCF…YTVH. The segment at residues 79–105 is a DNA-binding region (zn(2)-C6 fungal-type); it reads CSNCAKTKTKCDKKFPCSRCAGRNLRC. Disordered stretches follow at residues 113 to 231 and 426 to 445; these read ASKN…SPRF and THRE…PSGA. A compositionally biased stretch (low complexity) spans 152-165; sequence SSSPSSQKSGTPIS. The segment covering 432-445 has biased composition (polar residues); the sequence is GTSNGSHSPNPSGA.

The protein resides in the nucleus. Its function is as follows. Transcription factor; part of the gene cluster 29 that mediates the biosynthesis of dihydroxynaphthalene (DHN)-melanin, a bluish-green pigment forming a dark layer in the conidial wall that protects the conidia from UV radiations. The sequence is that of Transcription factor MYCGRDRAFT_87993 from Zymoseptoria tritici (strain CBS 115943 / IPO323) (Speckled leaf blotch fungus).